The following is a 67-amino-acid chain: Beta-defensin 123 (67 aa).

A signal peptide spans 1–20; the sequence is MKLLLLTLTVLLLLSQLTPG. 3 disulfide bridges follow: Cys25/Cys52, Cys32/Cys46, and Cys36/Cys53.

Belongs to the beta-defensin family. In terms of tissue distribution, abundant expression in the male reproductive tract only. Expressed abundantly in testis, while expression in epididymis decreased gradually from caput to cauda.

The protein resides in the secreted. Has antibacterial activity. The protein is Beta-defensin 123 (DEFB123) of Macaca mulatta (Rhesus macaque).